Here is a 432-residue protein sequence, read N- to C-terminus: Trigger factor (432 aa).

The PPIase FKBP-type domain occupies 161–246 (GTRATINFVG…VVKVESRELP (86 aa)).

It belongs to the FKBP-type PPIase family. Tig subfamily.

The protein resides in the cytoplasm. The catalysed reaction is [protein]-peptidylproline (omega=180) = [protein]-peptidylproline (omega=0). In terms of biological role, involved in protein export. Acts as a chaperone by maintaining the newly synthesized protein in an open conformation. Functions as a peptidyl-prolyl cis-trans isomerase. In Aliivibrio fischeri (strain ATCC 700601 / ES114) (Vibrio fischeri), this protein is Trigger factor.